The sequence spans 156 residues: Small ribosomal subunit protein uS7 (156 aa).

The protein belongs to the universal ribosomal protein uS7 family. In terms of assembly, part of the 30S ribosomal subunit. Contacts proteins S9 and S11.

Functionally, one of the primary rRNA binding proteins, it binds directly to 16S rRNA where it nucleates assembly of the head domain of the 30S subunit. Is located at the subunit interface close to the decoding center, probably blocks exit of the E-site tRNA. The sequence is that of Small ribosomal subunit protein uS7 from Deinococcus geothermalis (strain DSM 11300 / CIP 105573 / AG-3a).